We begin with the raw amino-acid sequence, 124 residues long: Putative membrane protein insertion efficiency factor (124 aa).

Belongs to the UPF0161 family.

It is found in the cell inner membrane. Functionally, could be involved in insertion of integral membrane proteins into the membrane. The polypeptide is Putative membrane protein insertion efficiency factor (Psychrobacter arcticus (strain DSM 17307 / VKM B-2377 / 273-4)).